Here is a 141-residue protein sequence, read N- to C-terminus: Putative pre-16S rRNA nuclease (141 aa).

This sequence belongs to the YqgF nuclease family.

Its subcellular location is the cytoplasm. Could be a nuclease involved in processing of the 5'-end of pre-16S rRNA. In Sodalis glossinidius (strain morsitans), this protein is Putative pre-16S rRNA nuclease.